Consider the following 507-residue polypeptide: Bifunctional purine biosynthesis protein PurH (507 aa).

Positions 1 to 144 constitute an MGS-like domain; the sequence is MKRALLSVSD…KNSDSVWAVV (144 aa).

This sequence belongs to the PurH family.

The enzyme catalyses (6R)-10-formyltetrahydrofolate + 5-amino-1-(5-phospho-beta-D-ribosyl)imidazole-4-carboxamide = 5-formamido-1-(5-phospho-D-ribosyl)imidazole-4-carboxamide + (6S)-5,6,7,8-tetrahydrofolate. The catalysed reaction is IMP + H2O = 5-formamido-1-(5-phospho-D-ribosyl)imidazole-4-carboxamide. The protein operates within purine metabolism; IMP biosynthesis via de novo pathway; 5-formamido-1-(5-phospho-D-ribosyl)imidazole-4-carboxamide from 5-amino-1-(5-phospho-D-ribosyl)imidazole-4-carboxamide (10-formyl THF route): step 1/1. Its pathway is purine metabolism; IMP biosynthesis via de novo pathway; IMP from 5-formamido-1-(5-phospho-D-ribosyl)imidazole-4-carboxamide: step 1/1. The protein is Bifunctional purine biosynthesis protein PurH of Lacticaseibacillus paracasei (strain ATCC 334 / BCRC 17002 / CCUG 31169 / CIP 107868 / KCTC 3260 / NRRL B-441) (Lactobacillus paracasei).